A 453-amino-acid polypeptide reads, in one-letter code: F-box protein At4g27050 (453 aa).

The region spanning 3 to 51 (TDLISNLPDDVLGKILSLVPTKLAAATSVLSKRWRNLLPLVDSLDFDET) is the F-box domain.

Part of a SCF (ASK-cullin-F-box) protein ligase complex.

Its pathway is protein modification; protein ubiquitination. Component of SCF(ASK-cullin-F-box) E3 ubiquitin ligase complexes, which may mediate the ubiquitination and subsequent proteasomal degradation of target proteins. In Arabidopsis thaliana (Mouse-ear cress), this protein is F-box protein At4g27050.